The chain runs to 592 residues: BRCA1-associated protein (592 aa).

At Ser52 the chain carries Phosphoserine. Residues 78-124 (KSNPDELKTTVEERKSSEASPTAQRSKDHSKECINAAPDSPSKQLPD) are disordered. Basic and acidic residues predominate over residues 80–94 (NPDELKTTVEERKSS). A phosphoserine mark is found at Ser97, Ser117, and Ser119. The RING-type zinc finger occupies 264–304 (CTVCLERMDESVNGILTTLCNHSFHSQCLQRWDDTTCPVCR). The UBP-type; degenerate zinc-finger motif lies at 301 to 393 (PVCRYCQTPE…GKIVQYECEG (93 aa)). The Zn(2+) site is built by Cys317, Cys320, Cys329, Cys332, Cys337, His344, His348, and His354. A coiled-coil region spans residues 429-537 (RIEKDTAEEI…EIQEQLRDVM (109 aa)). The interval 565–592 (AMASASSPASSGGSGKLPSRKGRSKRGK) is disordered. A compositionally biased stretch (basic residues) spans 582-592 (PSRKGRSKRGK).

In terms of assembly, interacts with the nuclear localization signal of BRCA1 and with the N-terminal of KSR1. The C-terminal portion of BCRA1 interacts with DDB1. In terms of tissue distribution, expressed in breast epithelial cell lines.

It is found in the cytoplasm. The enzyme catalyses S-ubiquitinyl-[E2 ubiquitin-conjugating enzyme]-L-cysteine + [acceptor protein]-L-lysine = [E2 ubiquitin-conjugating enzyme]-L-cysteine + N(6)-ubiquitinyl-[acceptor protein]-L-lysine.. The protein operates within protein modification; protein ubiquitination. In terms of biological role, negatively regulates MAP kinase activation by limiting the formation of Raf/MEK complexes probably by inactivation of the KSR1 scaffold protein. Also acts as a Ras responsive E3 ubiquitin ligase that, on activation of Ras, is modified by auto-polyubiquitination resulting in the release of inhibition of Raf/MEK complex formation. May also act as a cytoplasmic retention protein with a role in regulating nuclear transport. The chain is BRCA1-associated protein from Homo sapiens (Human).